We begin with the raw amino-acid sequence, 117 residues long: MRHRHGYRKLGRTSTHRAALLKNLTIAIIKAGKIETTLPKAKELRGYVERLITRARKGDFNAHRAVFASLQDKEATNKLVTEIAPKFADRNGGYTRIIKTRIRRGDAAEMAFIEFVA.

Belongs to the bacterial ribosomal protein bL17 family. Part of the 50S ribosomal subunit. Contacts protein L32.

The protein is Large ribosomal subunit protein bL17 of Campylobacter lari (strain RM2100 / D67 / ATCC BAA-1060).